Here is an 818-residue protein sequence, read N- to C-terminus: BDNF/NT-3 growth factors receptor (818 aa).

An N-terminal signal peptide occupies residues 1 to 31 (MVSWRRRPGPGLARLWGLCCLVLGCWRGALG). 2 cysteine pairs are disulfide-bonded: Cys32–Cys38 and Cys36–Cys45. Topologically, residues 32–426 (CPASCRCSSW…DVSNKENEDS (395 aa)) are extracellular. An N-linked (GlcNAc...) asparagine glycan is attached at Asn66. The stretch at 71-92 (YIANQRKLESINDNEVGFYVGL) is one LRR 1 repeat. Asn94 carries N-linked (GlcNAc...) asparagine glycosylation. An LRR 2 repeat occupies 95–116 (LTVVDSGLRFVSRQAFVKNINL). A glycan (N-linked (GlcNAc...) asparagine) is linked at Asn120. Intrachain disulfides connect Cys151–Cys175 and Cys153–Cys193. Positions 196–281 (PSANLSNYNI…GEVQTSAELT (86 aa)) constitute an Ig-like C2-type 1 domain. N-linked (GlcNAc...) asparagine glycans are attached at residues Asn199, Asn204, Asn226, Asn253, Asn287, Asn324, and Asn337. A disulfide bond links Cys217 and Cys265. In terms of domain architecture, Ig-like C2-type 2 spans 295–364 (TPDHHWCIPF…NGAYTLLAKN (70 aa)). An intrachain disulfide couples Cys301 to Cys344. Residues 384-394 (GSGPIVDPDVY) are provides specificity for BDNF as ligand versus NTF3 and NTF4. Residues 400 to 418 (PNDLGDTTNNSNQITSPDV) are compositionally biased toward polar residues. The segment at 400–420 (PNDLGDTTNNSNQITSPDVSN) is disordered. N-linked (GlcNAc...) asparagine glycosylation occurs at Asn408. Residues 427 to 450 (ITVYVVVGIAALVCTGLVIMLIIL) traverse the membrane as a helical segment. Over 451-818 (KFGRHSKFGM…ASPVYLDILG (368 aa)) the chain is Cytoplasmic. The segment at 469-494 (NDDDSASPLHHISNGSNTPSSSEGGP) is disordered. Polar residues predominate over residues 481–491 (SNGSNTPSSSE). Tyr512 bears the Phosphotyrosine; by autocatalysis mark. The region spanning 534–803 (IVLKRELGEG…LNIKEIHSLL (270 aa)) is the Protein kinase domain. Residues 540–548 (LGEGAFGKV) and Lys568 each bind ATP. The active-site Proton acceptor is Asp672. Phosphotyrosine; by autocatalysis occurs at positions 698, 702, 703, and 813.

The protein belongs to the protein kinase superfamily. Tyr protein kinase family. Insulin receptor subfamily. As to quaternary structure, exists in a dynamic equilibrium between monomeric (low affinity) and dimeric (high affinity) structures. Interacts (phosphorylated upon activation by BDNF) with SHC1; mediates SHC1 phosphorylation and activation. Interacts (phosphorylated upon activation by BDNF) with PLCG1 and/or PLCG2; mediates PLCG1 phosphorylation and activation. Interacts with SH2B1 and SH2B2. Interacts with NGFR; may regulate the ligand specificity of the receptor. Interacts with SORCS2; this interaction is important for normal targeting to post-synaptic densities in response to high-frequency stimulation. Interacts (phosphorylated upon ligand-binding) with SH2D1A; regulates NTRK2. Interacts with SQSTM1 and KIDINS220. Interacts (phosphorylated upon ligand-binding) with FRS2; activates the MAPK signaling pathway. Interacts with APPL1. Interacts with MAPK8IP3/JIP3 and KLC1; interaction with KLC1 is mediated by MAPK8IP3/JIP3. Ligand-mediated auto-phosphorylation. As to expression, detected in embryonic brain and orsal root ganglia.

The protein resides in the cell membrane. It localises to the endosome membrane. Its subcellular location is the cell projection. It is found in the axon. The protein localises to the dendrite. The protein resides in the cytoplasm. It localises to the perinuclear region. Its subcellular location is the postsynaptic density. It catalyses the reaction L-tyrosyl-[protein] + ATP = O-phospho-L-tyrosyl-[protein] + ADP + H(+). The neuronal activity and the influx of calcium positively regulate the kinase activity and the internalization of the receptor which are both important for active signaling. Regulated by NGFR that may control the internalization of the receptor. NGFR may also stimulate the activation by BDNF compared to NTF3 and NTF4. The formation of active receptors dimers able to fully transduce the ligand-mediated signal, may be negatively regulated by the formation of inactive heterodimers with the non-catalytic isoforms. In terms of biological role, receptor tyrosine kinase involved in the development and the maturation of the central and the peripheral nervous systems through regulation of neuron survival, proliferation, migration, differentiation, and synapse formation and plasticity. Receptor for BDNF/brain-derived neurotrophic factor and NTF4/neurotrophin-4. Alternatively can also bind NTF3/neurotrophin-3 which is less efficient in activating the receptor but regulates neuron survival through NTRK2. Upon ligand-binding, undergoes homodimerization, autophosphorylation and activation. Recruits, phosphorylates and/or activates several downstream effectors including SHC1, FRS2, SH2B1, SH2B2 and PLCG1 that regulate distinct overlapping signaling cascades. Through SHC1, FRS2, SH2B1, SH2B2 activates the GRB2-Ras-MAPK cascade that regulates for instance neuronal differentiation including neurite outgrowth. Through the same effectors controls the Ras-PI3 kinase-AKT1 signaling cascade that mainly regulates growth and survival. Through PLCG1 and the downstream protein kinase C-regulated pathways controls synaptic plasticity. Thereby, plays a role in learning and memory by regulating both short term synaptic function and long-term potentiation. PLCG1 also leads to NF-Kappa-B activation and the transcription of genes involved in cell survival. Hence, it is able to suppress anoikis, the apoptosis resulting from loss of cell-matrix interactions. May also play a role in neutrophin-dependent calcium signaling in glial cells and mediate communication between neurons and glia. The protein is BDNF/NT-3 growth factors receptor (NTRK2) of Gallus gallus (Chicken).